Reading from the N-terminus, the 241-residue chain is MDLLIYGVNGHMGSLIKNLAEKDSYWRVIGGVDSEMSDDPMNNRYDVVVDFSHPSALQDVLQLCKEKKIPLVIGTTGFSKEQLEDIKFASAKIPILQSTNMSLGMNLLFRLVEQTAAVLKDKSDIEVIESHHNRKKDAPSGSARTIVESIEKGLGEEKKHQHGRVGECPREKGEIGIHAIRGGNIVGYHEANFINDLETIKIVHEAHNRSVFAQGALDAAKFIMDQEPGLYTMKDLLNLMV.

NAD(+) contacts are provided by residues 7–12 (GVNGHM), 74–76 (GTT), and 98–101 (STNM). His-131 acts as the Proton donor/acceptor in catalysis. His-132 is a (S)-2,3,4,5-tetrahydrodipicolinate binding site. The active-site Proton donor is Lys-135. 141–142 (GS) contributes to the (S)-2,3,4,5-tetrahydrodipicolinate binding site.

This sequence belongs to the DapB family.

The protein resides in the cytoplasm. It catalyses the reaction (S)-2,3,4,5-tetrahydrodipicolinate + NAD(+) + H2O = (2S,4S)-4-hydroxy-2,3,4,5-tetrahydrodipicolinate + NADH + H(+). The catalysed reaction is (S)-2,3,4,5-tetrahydrodipicolinate + NADP(+) + H2O = (2S,4S)-4-hydroxy-2,3,4,5-tetrahydrodipicolinate + NADPH + H(+). The protein operates within amino-acid biosynthesis; L-lysine biosynthesis via DAP pathway; (S)-tetrahydrodipicolinate from L-aspartate: step 4/4. Its function is as follows. Catalyzes the conversion of 4-hydroxy-tetrahydrodipicolinate (HTPA) to tetrahydrodipicolinate. The protein is 4-hydroxy-tetrahydrodipicolinate reductase of Alkaliphilus oremlandii (strain OhILAs) (Clostridium oremlandii (strain OhILAs)).